The sequence spans 178 residues: Adenine phosphoribosyltransferase (178 aa).

Belongs to the purine/pyrimidine phosphoribosyltransferase family. Homodimer.

The protein localises to the cytoplasm. It catalyses the reaction AMP + diphosphate = 5-phospho-alpha-D-ribose 1-diphosphate + adenine. Its pathway is purine metabolism; AMP biosynthesis via salvage pathway; AMP from adenine: step 1/1. In terms of biological role, catalyzes a salvage reaction resulting in the formation of AMP, that is energically less costly than de novo synthesis. The polypeptide is Adenine phosphoribosyltransferase (Helicobacter hepaticus (strain ATCC 51449 / 3B1)).